Reading from the N-terminus, the 101-residue chain is Small ribosomal subunit protein uS14 (101 aa).

Belongs to the universal ribosomal protein uS14 family. In terms of assembly, part of the 30S ribosomal subunit. Contacts proteins S3 and S10.

In terms of biological role, binds 16S rRNA, required for the assembly of 30S particles and may also be responsible for determining the conformation of the 16S rRNA at the A site. The polypeptide is Small ribosomal subunit protein uS14 (Bartonella henselae (strain ATCC 49882 / DSM 28221 / CCUG 30454 / Houston 1) (Rochalimaea henselae)).